We begin with the raw amino-acid sequence, 565 residues long: Dihydroxy-acid dehydratase (565 aa).

C53 lines the [2Fe-2S] cluster pocket. D85 contacts Mg(2+). C126 serves as a coordination point for [2Fe-2S] cluster. Mg(2+)-binding residues include D127 and K128. Residue K128 is modified to N6-carboxylysine. Residue C198 coordinates [2Fe-2S] cluster. Position 450 (E450) interacts with Mg(2+). The active-site Proton acceptor is S476.

This sequence belongs to the IlvD/Edd family. In terms of assembly, homodimer. [2Fe-2S] cluster serves as cofactor. The cofactor is Mg(2+).

It catalyses the reaction (2R)-2,3-dihydroxy-3-methylbutanoate = 3-methyl-2-oxobutanoate + H2O. It carries out the reaction (2R,3R)-2,3-dihydroxy-3-methylpentanoate = (S)-3-methyl-2-oxopentanoate + H2O. It functions in the pathway amino-acid biosynthesis; L-isoleucine biosynthesis; L-isoleucine from 2-oxobutanoate: step 3/4. Its pathway is amino-acid biosynthesis; L-valine biosynthesis; L-valine from pyruvate: step 3/4. Functionally, functions in the biosynthesis of branched-chain amino acids. Catalyzes the dehydration of (2R,3R)-2,3-dihydroxy-3-methylpentanoate (2,3-dihydroxy-3-methylvalerate) into 2-oxo-3-methylpentanoate (2-oxo-3-methylvalerate) and of (2R)-2,3-dihydroxy-3-methylbutanoate (2,3-dihydroxyisovalerate) into 2-oxo-3-methylbutanoate (2-oxoisovalerate), the penultimate precursor to L-isoleucine and L-valine, respectively. In Synechococcus sp. (strain JA-2-3B'a(2-13)) (Cyanobacteria bacterium Yellowstone B-Prime), this protein is Dihydroxy-acid dehydratase.